A 796-amino-acid polypeptide reads, in one-letter code: Protein SEY1 homolog (796 aa).

Topologically, residues 1–701 (MESSNDFSNK…AGTSISSWRN (701 aa)) are cytoplasmic. The GB1/RHD3-type G domain occupies 46–280 (GFRFNVVTIL…VPSDGFFVYS (235 aa)). 56 to 63 (GSQSSGKS) provides a ligand contact to GTP. Residues 554 to 626 (SLVLLLKAAR…DALTLLKVLK (73 aa)) are a coiled coil. A helical membrane pass occupies residues 702-722 (IPPIFWLVLLVLGWNELRSVF). Residues 723–725 (KVL) lie on the Lumenal side of the membrane. Residues 726–746 (LRFYVVIPLLIVFYFTFSYSA) traverse the membrane as a helical segment. The Cytoplasmic segment spans residues 747 to 796 (TKLLGPKADQYVKPVRDKVLSLFTALLAWFVRTLHMIASKSSSFKQRPAT).

The protein belongs to the TRAFAC class dynamin-like GTPase superfamily. GB1/RHD3 GTPase family. RHD3 subfamily.

It is found in the endoplasmic reticulum membrane. In terms of biological role, probable GTP-binding protein that may be involved in cell development. The chain is Protein SEY1 homolog from Theileria parva (East coast fever infection agent).